The sequence spans 425 residues: Serine--tRNA ligase (425 aa).

Residue 233-235 (TAE) coordinates L-serine. Residue 264-266 (RAE) coordinates ATP. Glu287 is a binding site for L-serine. 351–354 (EISS) is an ATP binding site. Ser387 serves as a coordination point for L-serine.

It belongs to the class-II aminoacyl-tRNA synthetase family. Type-1 seryl-tRNA synthetase subfamily. As to quaternary structure, homodimer. The tRNA molecule binds across the dimer.

Its subcellular location is the cytoplasm. It carries out the reaction tRNA(Ser) + L-serine + ATP = L-seryl-tRNA(Ser) + AMP + diphosphate + H(+). The enzyme catalyses tRNA(Sec) + L-serine + ATP = L-seryl-tRNA(Sec) + AMP + diphosphate + H(+). Its pathway is aminoacyl-tRNA biosynthesis; selenocysteinyl-tRNA(Sec) biosynthesis; L-seryl-tRNA(Sec) from L-serine and tRNA(Sec): step 1/1. In terms of biological role, catalyzes the attachment of serine to tRNA(Ser). Is also able to aminoacylate tRNA(Sec) with serine, to form the misacylated tRNA L-seryl-tRNA(Sec), which will be further converted into selenocysteinyl-tRNA(Sec). This chain is Serine--tRNA ligase, found in Clostridium perfringens (strain ATCC 13124 / DSM 756 / JCM 1290 / NCIMB 6125 / NCTC 8237 / Type A).